The primary structure comprises 539 residues: MTGSKNKARAQAKLEKRASAQARAVAEREAANANRGAGKSRDKGKGKAGSKSDAVAEVKAGSKGKVVAETKEGARPESKALVKGTSDFNHRTENKFARSTRKDKPSSDNWFWAGEDSGINSWFWKGEELSNNSVAKCENKPSTSIQARAEEPAPRTSHKSRSGAEEEEEENVIGNWFWEGDDTGFDTDPKPVFKIVKPQPVDEINEKDRPKDWSEVTIWPKAPAVTPAVLGYRSQDSSEARSSSYIVLASNEEETSTACTKNTRSSLQSIPEYPFGSDPCIQTLDEIRQQIKIREENGIKPFACPCKLECYLDSPEFEKLVNILKSTTDPLIHKIAQIAMGIHKVHPFAQEFINEVGVVTLIESLLSFSSPEVSIKKAVITLNSSGDDRYNKVEFHVKHMCKETVSFPLNSPGQQSGLKIIGQLTTESVHHYIVVSYFSELFHLLSQGNRKTRNLVLKVFLNMSENPKAARDMINMKALAALKLIFNQKEAKANLVSAVAIFINIKEHIRKGSIVVVDHLSYNTLTAIFREVKGIIERM.

Positions 1–10 (MTGSKNKARA) are enriched in basic residues. Disordered stretches follow at residues 1–112 (MTGS…NWFW) and 134–172 (VAKCENKPSTSIQARAEEPAPRTSHKSRSGAEEEEEENV). Basic and acidic residues-rich tracts occupy residues 66-80 (VVAETKEGARPESKA) and 88-106 (FNHRTENKFARSTRKDKPS). A compositionally biased stretch (polar residues) spans 134 to 146 (VAKCENKPSTSIQ).

Belongs to the GPRASP family. As to quaternary structure, homodimer.

The protein resides in the cytoplasm. It localises to the nucleus. Functionally, survival and differentiation promoting protein that plays a role in the regulation of neurosynaptogenesis. Induces phosphatase PP2A activity which results in APP dephosphorylation and inhibits BACE1-mediated processing of APP. The polypeptide is G protein-coupled receptor associated sorting protein 3 (Gprasp3) (Mus musculus (Mouse)).